Here is a 441-residue protein sequence, read N- to C-terminus: Cytochrome c biogenesis protein Ccs1 (441 aa).

Transmembrane regions (helical) follow at residues L19 to I39, T78 to A98, and I164 to N184.

The protein belongs to the Ccs1/CcsB family. As to quaternary structure, may interact with CcsA.

The protein localises to the plastid. It is found in the chloroplast thylakoid membrane. In terms of biological role, required during biogenesis of c-type cytochromes (cytochrome c6 and cytochrome f) at the step of heme attachment. The polypeptide is Cytochrome c biogenesis protein Ccs1 (Rhodomonas salina (Cryptomonas salina)).